The following is a 309-amino-acid chain: uncharacterized protein (309 aa).

Pro residues-rich tracts occupy residues 1-17 (MTSRAPSPPTPPCPSPP) and 24-51 (SPVPTATPASPPLKPLSNPLPPPPPTPR). 2 disordered regions span residues 1 to 174 (MTSR…PPGV) and 216 to 240 (PPDLPSPPLSPPLSPPLSPISPLHA). The span at 67-83 (LRSSPSSALNASRGAPS) shows a compositional bias: low complexity. A compositionally biased stretch (pro residues) spans 84–112 (TSPPPSSSPPSSPASTPPSRTPSPTPTAP). Low complexity-rich tracts occupy residues 113 to 125 (ASPVASTAMTPAS) and 135 to 144 (APSSSAALSS). Positions 160–174 (PPPPLPPPLQPPPGV) are enriched in pro residues. The chain crosses the membrane as a helical span at residues 278-298 (LFLLFTLLSIHFSPFPIFILL).

Its subcellular location is the host membrane. This is an uncharacterized protein from Vitis vinifera (Grape).